Here is a 213-residue protein sequence, read N- to C-terminus: Protein MobE (213 aa).

In Acidithiobacillus ferrooxidans (Thiobacillus ferrooxidans), this protein is Protein MobE (mobE).